The chain runs to 274 residues: Exosome complex component Rrp42 (274 aa).

It belongs to the RNase PH family. Rrp42 subfamily. As to quaternary structure, component of the archaeal exosome complex. Forms a hexameric ring-like arrangement composed of 3 Rrp41-Rrp42 heterodimers. The hexameric ring associates with a trimer of Rrp4 and/or Csl4 subunits.

The protein localises to the cytoplasm. Its function is as follows. Non-catalytic component of the exosome, which is a complex involved in RNA degradation. Contributes to the structuring of the Rrp41 active site. The chain is Exosome complex component Rrp42 from Pyrococcus horikoshii (strain ATCC 700860 / DSM 12428 / JCM 9974 / NBRC 100139 / OT-3).